Reading from the N-terminus, the 752-residue chain is Photosystem I P700 chlorophyll a apoprotein A1 (752 aa).

The next 8 helical transmembrane spans lie at 73–96, 159–182, 198–222, 294–312, 349–372, 388–414, 436–458, and 533–551; these read IFSAHFGHLAVVFIWLSGAYFHGA, LYVTAIGALVMAALMLFAGWFHYH, MNHHLAGLFGLGSLSWAGHQIHVSL, RAHHHLAIAVLFIVAGHMY, WHAQLSLNLALFGSLSIIVAHHMY, LCLFTHHVWIGGFLIVGAGAHAAIFMV, AIISHLNWVCIFLGFHSFGLYIH, and FLVHHIHAFTIHVTVLILL. 2 residues coordinate [4Fe-4S] cluster: cysteine 575 and cysteine 584. 2 helical membrane-spanning segments follow: residues 591–612 and 666–688; these read HVFLGLFWMYNSLSVVLFHFSW and LSAYGLMFLGAHFIWAFSLMFLF. Residue histidine 677 coordinates chlorophyll a'. The chlorophyll a site is built by methionine 685 and tyrosine 693. Tryptophan 694 lines the phylloquinone pocket. Residues 726 to 746 form a helical membrane-spanning segment; it reads AVGVAHYLLGGIATTWSFFHA.

This sequence belongs to the PsaA/PsaB family. The PsaA/B heterodimer binds the P700 chlorophyll special pair and subsequent electron acceptors. PSI consists of a core antenna complex that captures photons, and an electron transfer chain that converts photonic excitation into a charge separation. The eukaryotic PSI reaction center is composed of at least 11 subunits. It depends on P700 is a chlorophyll a/chlorophyll a' dimer, A0 is one or more chlorophyll a, A1 is one or both phylloquinones and FX is a shared 4Fe-4S iron-sulfur center. as a cofactor.

It is found in the plastid. The protein resides in the cyanelle thylakoid membrane. The enzyme catalyses reduced [plastocyanin] + hnu + oxidized [2Fe-2S]-[ferredoxin] = oxidized [plastocyanin] + reduced [2Fe-2S]-[ferredoxin]. Its function is as follows. PsaA and PsaB bind P700, the primary electron donor of photosystem I (PSI), as well as the electron acceptors A0, A1 and FX. PSI is a cytochrome c6-ferredoxin oxidoreductase, converting photonic excitation into a charge separation, which transfers an electron from the donor P700 chlorophyll pair to the spectroscopically characterized acceptors A0, A1, FX, FA and FB in turn. Oxidized P700 is reduced on the lumenal side of the thylakoid membrane by cytochrome c6. The polypeptide is Photosystem I P700 chlorophyll a apoprotein A1 (Cyanophora paradoxa).